We begin with the raw amino-acid sequence, 723 residues long: E3 ubiquitin-protein ligase LRSAM1 (723 aa).

LRR repeat units follow at residues 30 to 51, 56 to 77, 82 to 103, 105 to 127, 128 to 149, and 151 to 172; these read ADDILDISKCELSEIPFGAFAT, QKKVLIVHTNHLTSLLPKSCSL, TIKVLDLHDNQLTALPDDLGQL, ALQVLNVERNQLMQLPRSIGNLT, QLQTLNVKDNKLKELPDTVGEL, and SLRTLNISGNEIQRLPQMLAHV. Ser-234 carries the post-translational modification Phosphoserine. Coiled coils occupy residues 254–380 and 510–562; these read SDYE…TESL and ALSS…KPLS. The segment at 282 to 314 is disordered; sequence TQLLQQSSSQKDEILQTVKEEQSRLEQGLSEHQ. The span at 291–314 shows a compositional bias: basic and acidic residues; that stretch reads QKDEILQTVKEEQSRLEQGLSEHQ. The SAM domain occupies 569–632; it reads GMERQLVALL…LRRVQELLDA (64 aa). Ser-604 is modified (phosphoserine). The disordered stretch occupies residues 642–665; it reads PMGEVVTPTAPQEPPESVRPSAPP. Short sequence motifs (PTAP motif) lie at residues 649 to 652 and 661 to 664; these read PTAP and PSAP. The segment at 675–710 adopts an RING-type zinc-finger fold; the sequence is CVVCLEREAQMIFLNCGHVCCCQQCCQPLRTCPLCR.

Interacts with TSG101. Interacts with PHF23. Interacts with FUS. Post-translationally, ubiquitination promoted by PHF23 leads to proteasomal degradation. Highly expressed in adult spinal cord motoneurons as well as in fetal spinal cord and muscle tissue.

It localises to the cytoplasm. The enzyme catalyses S-ubiquitinyl-[E2 ubiquitin-conjugating enzyme]-L-cysteine + [acceptor protein]-L-lysine = [E2 ubiquitin-conjugating enzyme]-L-cysteine + N(6)-ubiquitinyl-[acceptor protein]-L-lysine.. Its pathway is protein modification; protein ubiquitination. E3 ubiquitin-protein ligase that mediates monoubiquitination of TSG101 at multiple sites, leading to inactivate the ability of TSG101 to sort endocytic (EGF receptors) and exocytic (HIV-1 viral proteins) cargos. Bacterial recognition protein that defends the cytoplasm from invasive pathogens. Localizes to several intracellular bacterial pathogens and generates the bacteria-associated ubiquitin signal leading to autophagy-mediated intracellular bacteria degradation (xenophagy). The chain is E3 ubiquitin-protein ligase LRSAM1 from Homo sapiens (Human).